We begin with the raw amino-acid sequence, 477 residues long: Glycogen synthase (477 aa).

Lysine 15 serves as a coordination point for ADP-alpha-D-glucose.

The protein belongs to the glycosyltransferase 1 family. Bacterial/plant glycogen synthase subfamily.

The catalysed reaction is [(1-&gt;4)-alpha-D-glucosyl](n) + ADP-alpha-D-glucose = [(1-&gt;4)-alpha-D-glucosyl](n+1) + ADP + H(+). It participates in glycan biosynthesis; glycogen biosynthesis. Synthesizes alpha-1,4-glucan chains using ADP-glucose. The chain is Glycogen synthase from Streptococcus pneumoniae serotype 19F (strain G54).